Consider the following 256-residue polypeptide: Pimeloyl-[acyl-carrier protein] methyl ester esterase (256 aa).

An AB hydrolase-1 domain is found at 15–242; sequence HLVLLHGWGL…AAHAPFISHP (228 aa). Substrate-binding positions include tryptophan 22, 82-83, and 143-147; these read SL and FLALQ. Serine 82 serves as the catalytic Nucleophile. Catalysis depends on residues aspartate 207 and histidine 235. Histidine 235 contributes to the substrate binding site.

It belongs to the AB hydrolase superfamily. Carboxylesterase BioH family. Monomer.

Its subcellular location is the cytoplasm. The catalysed reaction is 6-carboxyhexanoyl-[ACP] methyl ester + H2O = 6-carboxyhexanoyl-[ACP] + methanol + H(+). Its pathway is cofactor biosynthesis; biotin biosynthesis. Functionally, the physiological role of BioH is to remove the methyl group introduced by BioC when the pimeloyl moiety is complete. It allows to synthesize pimeloyl-ACP via the fatty acid synthetic pathway through the hydrolysis of the ester bonds of pimeloyl-ACP esters. This chain is Pimeloyl-[acyl-carrier protein] methyl ester esterase, found in Escherichia coli O157:H7.